The following is a 154-amino-acid chain: Small ribosomal subunit protein bS16 (154 aa).

Low complexity predominate over residues 111 to 121 (AAAGLAEAPTK). Positions 111–154 (AAAGLAEAPTKPAKKAAKAEAAPKTDEAAPKTEEQAGAGSGEQG) are disordered. Residues 127–144 (AKAEAAPKTDEAAPKTEE) are compositionally biased toward basic and acidic residues.

Belongs to the bacterial ribosomal protein bS16 family.

The protein is Small ribosomal subunit protein bS16 of Salinispora tropica (strain ATCC BAA-916 / DSM 44818 / JCM 13857 / NBRC 105044 / CNB-440).